The following is a 449-amino-acid chain: L-lysine-epsilon aminotransferase (449 aa).

Residues Gly128 and Ala129 each contribute to the pyridoxal 5'-phosphate site. 2 residues coordinate 2-oxoglutarate: Arg170 and Gln274. Arg170 is a binding site for L-lysine. Gln274 is a pyridoxal 5'-phosphate binding site. At Lys300 the chain carries N6-(pyridoxal phosphate)lysine. 2-oxoglutarate is bound at residue Arg422.

The protein belongs to the class-III pyridoxal-phosphate-dependent aminotransferase family. Requires pyridoxal 5'-phosphate as cofactor.

The enzyme catalyses L-lysine + 2-oxoglutarate = (S)-2-amino-6-oxohexanoate + L-glutamate. Functionally, catalyzes the transfer of the terminal amino group of L-lysine to alpha-ketoglutarate to yield L-glutamate and 2-aminoadipate 6-semialdehyde ((S)-2-amino-6-oxohexanoate), which is spontaneously converted to the dehydrated form 1-piperideine 6-carboxylate. The sequence is that of L-lysine-epsilon aminotransferase from Mycobacterium bovis (strain ATCC BAA-935 / AF2122/97).